We begin with the raw amino-acid sequence, 281 residues long: NADPH-dependent 7-cyano-7-deazaguanine reductase (281 aa).

Residue V88 to S90 participates in substrate binding. S90–K91 is a binding site for NADPH. Residue C189 is the Thioimide intermediate of the active site. D196 (proton donor) is an active-site residue. H228–E229 contacts substrate. R257–G258 contributes to the NADPH binding site.

The protein belongs to the GTP cyclohydrolase I family. QueF type 2 subfamily. In terms of assembly, homodimer.

The protein resides in the cytoplasm. It catalyses the reaction 7-aminomethyl-7-carbaguanine + 2 NADP(+) = 7-cyano-7-deazaguanine + 2 NADPH + 3 H(+). Its pathway is tRNA modification; tRNA-queuosine biosynthesis. Catalyzes the NADPH-dependent reduction of 7-cyano-7-deazaguanine (preQ0) to 7-aminomethyl-7-deazaguanine (preQ1). In Klebsiella pneumoniae (strain 342), this protein is NADPH-dependent 7-cyano-7-deazaguanine reductase.